The chain runs to 261 residues: Thiamine thiazole synthase (261 aa).

NAD(+) is bound by residues serine 40, 59-60, glycine 67, valine 133, and 159-161; these read ER and HID. Residues aspartate 161 and histidine 176 each coordinate Fe cation. The NAD(+) site is built by serine 179 and methionine 226. A glycine-binding site is contributed by arginine 236.

The protein belongs to the THI4 family. Homooctamer; tetramer of dimers. Fe(2+) is required as a cofactor.

It catalyses the reaction hydrogen sulfide + glycine + NAD(+) = ADP-5-ethyl-4-methylthiazole-2-carboxylate + nicotinamide + 3 H2O + H(+). The protein operates within cofactor biosynthesis; thiamine diphosphate biosynthesis. Its function is as follows. Involved in the biosynthesis of the thiazole moiety of thiamine. Catalyzes the conversion of NAD and glycine to adenosine diphosphate 5-(2-hydroxyethyl)-4-methylthiazole-2-carboxylate (ADT), an adenylated thiazole intermediate, using free sulfide as a source of sulfur. This is Thiamine thiazole synthase from Methanococcus maripaludis (strain C6 / ATCC BAA-1332).